Here is a 309-residue protein sequence, read N- to C-terminus: Oxygen-dependent coproporphyrinogen-III oxidase (309 aa).

Serine 100 contributes to the substrate binding site. A divalent metal cation-binding residues include histidine 104 and histidine 114. Histidine 114 functions as the Proton donor in the catalytic mechanism. Substrate is bound at residue 116 to 118 (NVR). Positions 153 and 183 each coordinate a divalent metal cation. The important for dimerization stretch occupies residues 248 to 283 (YAEFNLVYDRGTLFGLQSGGRTESILMSLPPIVHWE). 266 to 268 (GGR) serves as a coordination point for substrate.

The protein belongs to the aerobic coproporphyrinogen-III oxidase family. As to quaternary structure, homodimer. A divalent metal cation serves as cofactor.

It localises to the cytoplasm. The catalysed reaction is coproporphyrinogen III + O2 + 2 H(+) = protoporphyrinogen IX + 2 CO2 + 2 H2O. It functions in the pathway porphyrin-containing compound metabolism; protoporphyrin-IX biosynthesis; protoporphyrinogen-IX from coproporphyrinogen-III (O2 route): step 1/1. Involved in the heme biosynthesis. Catalyzes the aerobic oxidative decarboxylation of propionate groups of rings A and B of coproporphyrinogen-III to yield the vinyl groups in protoporphyrinogen-IX. This Legionella pneumophila (strain Lens) protein is Oxygen-dependent coproporphyrinogen-III oxidase.